Reading from the N-terminus, the 739-residue chain is Phosphoribosylformylglycinamidine synthase subunit PurL (739 aa).

His54 is a catalytic residue. Residues Tyr57 and Lys96 each coordinate ATP. Glu98 lines the Mg(2+) pocket. Residues 99–102 (SHNH) and Arg121 contribute to the substrate site. Residue His100 is the Proton acceptor of the active site. Asp122 is a binding site for Mg(2+). Gln245 contacts substrate. Asp273 contacts Mg(2+). 317 to 319 (ESQ) is a binding site for substrate. ATP-binding residues include Asp500 and Gly537. Residue Asn538 participates in Mg(2+) binding. Residue Ser540 participates in substrate binding.

The protein belongs to the FGAMS family. Monomer. Part of the FGAM synthase complex composed of 1 PurL, 1 PurQ and 2 PurS subunits.

The protein resides in the cytoplasm. It carries out the reaction N(2)-formyl-N(1)-(5-phospho-beta-D-ribosyl)glycinamide + L-glutamine + ATP + H2O = 2-formamido-N(1)-(5-O-phospho-beta-D-ribosyl)acetamidine + L-glutamate + ADP + phosphate + H(+). Its pathway is purine metabolism; IMP biosynthesis via de novo pathway; 5-amino-1-(5-phospho-D-ribosyl)imidazole from N(2)-formyl-N(1)-(5-phospho-D-ribosyl)glycinamide: step 1/2. Its function is as follows. Part of the phosphoribosylformylglycinamidine synthase complex involved in the purines biosynthetic pathway. Catalyzes the ATP-dependent conversion of formylglycinamide ribonucleotide (FGAR) and glutamine to yield formylglycinamidine ribonucleotide (FGAM) and glutamate. The FGAM synthase complex is composed of three subunits. PurQ produces an ammonia molecule by converting glutamine to glutamate. PurL transfers the ammonia molecule to FGAR to form FGAM in an ATP-dependent manner. PurS interacts with PurQ and PurL and is thought to assist in the transfer of the ammonia molecule from PurQ to PurL. This Bacillus cereus (strain ZK / E33L) protein is Phosphoribosylformylglycinamidine synthase subunit PurL.